The sequence spans 259 residues: Probable iron export permease protein FetB (259 aa).

Topologically, residues 1–5 (MNSHN) are periplasmic. The helical transmembrane segment at 6-26 (ITNESLALALMLVVVAILISH) threads the bilayer. Topologically, residues 27–35 (KEKLALEKD) are cytoplasmic. The next 2 membrane-spanning stretches (helical) occupy residues 36-56 (ILWS…VLKY) and 57-77 (IFSV…CFNA). The Cytoplasmic segment spans residues 78 to 91 (AWNAQKRSKYIAKA). Residues 92 to 112 (FISSFIAITVGAGITLAVLIL) form a helical membrane-spanning segment. Topologically, residues 113 to 117 (SGSIE) are periplasmic. The chain crosses the membrane as a helical span at residues 118-138 (FIPMQVIPIAGMIAGNAMVAV). At 139-191 (GLCYNNLGQRVISEQQQIQEKLSLGATPKQASAILIRDSIRAALIPTVDSAKT) the chain is on the cytoplasmic side. A helical membrane pass occupies residues 192-212 (VGLVSLPGMMSGLIFAGIDPV). Topologically, residues 213–218 (KAIKYQ) are periplasmic. Residues 219–239 (IMVTFMLLSTASLSTIIACYL) traverse the membrane as a helical segment. Topologically, residues 240–259 (TYRKFYNSRHQLVVTQLKKK) are cytoplasmic.

It belongs to the UPF0014 family. As to quaternary structure, the complex is composed of two ATP-binding proteins (FetA) and two transmembrane proteins (FetB).

Its subcellular location is the cell inner membrane. Functionally, part of the ABC transporter complex FetAB, which is probably involved in iron export and enhances resistance to H(2)O(2)-mediated oxidative stress. Probably responsible for the translocation of the substrate across the membrane. The sequence is that of Probable iron export permease protein FetB (fetB) from Escherichia coli (strain K12).